We begin with the raw amino-acid sequence, 250 residues long: Cyclin-Q (250 aa).

At M1 the chain carries N-acetylmethionine. Residues 1–10 show a composition bias toward basic and acidic residues; the sequence is MEAVRPDSCE. Positions 1 to 22 are disordered; it reads MEAVRPDSCERGTAAARAEERP.

It belongs to the cyclin family. Cyclin-like FAM58 subfamily. As to quaternary structure, associates with CDK10 to promote its kinase activity.

In terms of biological role, activating cyclin for the cyclin-associated kinase CDK10. The polypeptide is Cyclin-Q (Ccnq) (Rattus norvegicus (Rat)).